The chain runs to 178 residues: Ribosome maturation factor RimM (178 aa).

Positions Ala-101–Phe-178 constitute a PRC barrel domain.

The protein belongs to the RimM family. Binds ribosomal protein uS19.

The protein resides in the cytoplasm. An accessory protein needed during the final step in the assembly of 30S ribosomal subunit, possibly for assembly of the head region. Essential for efficient processing of 16S rRNA. May be needed both before and after RbfA during the maturation of 16S rRNA. It has affinity for free ribosomal 30S subunits but not for 70S ribosomes. This chain is Ribosome maturation factor RimM, found in Pseudomonas fluorescens (strain Pf0-1).